We begin with the raw amino-acid sequence, 304 residues long: MSLFDWFANRRKSHPVTKAQPEREISDGLWSKCESCGALTYTKDLRANQMVCLECGHHLRVTSDERIAQLIDAETWVAMDNNLVACDPLQFRDRKAYCDRIQEYQSKTGLQDAVQTGVGELDGLPLALGVMDFRFMGGSMGSVVGEKLTRLIEHATQNRLPLVIVCASGGARMQEGMLSLMQMAKTSAALDQHRTNRLLYIPVLTHPTTGGVTASFAMLGDMILAEPKATIGFAGRRVVEQTLREKLPDDFQTAEYLLSHGFVDAIVPRPELKRTLAQLIRIHAQMPMASDVSPAAVPVAAAVE.

The CoA carboxyltransferase N-terminal domain maps to 29–298 (LWSKCESCGA…ASDVSPAAVP (270 aa)). Zn(2+) is bound by residues Cys33, Cys36, Cys52, and Cys55. A C4-type zinc finger spans residues 33–55 (CESCGALTYTKDLRANQMVCLEC).

This sequence belongs to the AccD/PCCB family. As to quaternary structure, acetyl-CoA carboxylase is a heterohexamer composed of biotin carboxyl carrier protein (AccB), biotin carboxylase (AccC) and two subunits each of ACCase subunit alpha (AccA) and ACCase subunit beta (AccD). Requires Zn(2+) as cofactor.

The protein resides in the cytoplasm. It carries out the reaction N(6)-carboxybiotinyl-L-lysyl-[protein] + acetyl-CoA = N(6)-biotinyl-L-lysyl-[protein] + malonyl-CoA. It participates in lipid metabolism; malonyl-CoA biosynthesis; malonyl-CoA from acetyl-CoA: step 1/1. Component of the acetyl coenzyme A carboxylase (ACC) complex. Biotin carboxylase (BC) catalyzes the carboxylation of biotin on its carrier protein (BCCP) and then the CO(2) group is transferred by the transcarboxylase to acetyl-CoA to form malonyl-CoA. The chain is Acetyl-coenzyme A carboxylase carboxyl transferase subunit beta from Acaryochloris marina (strain MBIC 11017).